The chain runs to 118 residues: Large ribosomal subunit protein bL19 (118 aa).

The protein belongs to the bacterial ribosomal protein bL19 family.

Its function is as follows. This protein is located at the 30S-50S ribosomal subunit interface and may play a role in the structure and function of the aminoacyl-tRNA binding site. This chain is Large ribosomal subunit protein bL19, found in Salinibacter ruber (strain DSM 13855 / M31).